Here is a 59-residue protein sequence, read N- to C-terminus: Large ribosomal subunit protein uL30 (59 aa).

This sequence belongs to the universal ribosomal protein uL30 family. As to quaternary structure, part of the 50S ribosomal subunit.

This chain is Large ribosomal subunit protein uL30, found in Photorhabdus laumondii subsp. laumondii (strain DSM 15139 / CIP 105565 / TT01) (Photorhabdus luminescens subsp. laumondii).